Here is an 801-residue protein sequence, read N- to C-terminus: Phosphatidylinositol 4-kinase beta (801 aa).

Disordered stretches follow at residues 1 to 29 (MGDT…GGSL), 101 to 121 (EDEM…RRRQ), and 250 to 304 (RKRE…EDEP). G2 carries the post-translational modification N-acetylglycine. Residues 2–68 (GDTAVEPAPL…VRLLHGAVAV (67 aa)) are interaction with ACBD3. Residues 29-242 (LLSVITEGVG…GTKLRKLILS (214 aa)) enclose the PIK helical domain. Phosphoserine is present on S258. Residues 259-268 (PALNTGLSPS) are compositionally biased toward polar residues. T263 carries the phosphothreonine modification. Phosphoserine is present on residues S266, S275, S277, S284, S294, and S413. The segment covering 278–294 (DATASISLSSSLKRTAS) has biased composition (low complexity). T423 is modified (phosphothreonine). S496 carries the phosphoserine modification. T502 and T504 each carry phosphothreonine. The PI3K/PI4K catalytic domain occupies 520–786 (EPWQEKVRRI…MVDGSMRSIT (267 aa)). The segment at 526-532 (VRRIREG) is G-loop. Residues 653 to 661 (QVKDRHNGN) are catalytic loop. The activation loop stretch occupies residues 672-696 (HIDFGFILSSSPRNLGFETSAFKLT).

The protein belongs to the PI3/PI4-kinase family. Type III PI4K subfamily. In terms of assembly, interacts with ARF1 and ARF3 in the Golgi complex, but not with ARF4, ARF5 or ARF6. Interacts with NCS1/FREQ in a calcium-independent manner. Interacts with CALN1/CABP8 and CALN2/CABP7; in a calcium-dependent manner; this interaction competes with NCS1/FREQ binding. Interacts with ACBD3. Interacts with ARMH3, YWHAB, YWHAE, YWHAG, YWHAH, YWHAQ, YWHAZ and SFN. Interacts with GGA2 (via VHS domain); the interaction is important for PI4KB location at the Golgi apparatus membrane. Interacts with ATG9A. The cofactor is Mg(2+). Requires Mn(2+) as cofactor.

The protein resides in the endomembrane system. The protein localises to the mitochondrion outer membrane. Its subcellular location is the rough endoplasmic reticulum membrane. It is found in the golgi apparatus. It localises to the golgi apparatus membrane. The catalysed reaction is a 1,2-diacyl-sn-glycero-3-phospho-(1D-myo-inositol) + ATP = a 1,2-diacyl-sn-glycero-3-phospho-(1D-myo-inositol 4-phosphate) + ADP + H(+). Inhibited by wortmannin. Increased kinase activity upon interaction with NCS1/FREQ. Phosphorylates phosphatidylinositol (PI) in the first committed step in the production of the second messenger inositol-1,4,5,-trisphosphate (PIP). May regulate Golgi disintegration/reorganization during mitosis, possibly via its phosphorylation. Involved in Golgi-to-plasma membrane trafficking. May play an important role in the inner ear development. The protein is Phosphatidylinositol 4-kinase beta (PI4KB) of Sorex araneus (Eurasian common shrew).